Consider the following 347-residue polypeptide: Spermidine/putrescine import ATP-binding protein PotA (347 aa).

In terms of domain architecture, ABC transporter spans 6 to 238 (LEIKNLSHYY…PKTKFVADFI (233 aa)). 40–47 (GPSGCGKT) lines the ATP pocket.

Belongs to the ABC transporter superfamily. Spermidine/putrescine importer (TC 3.A.1.11.1) family. As to quaternary structure, the complex is composed of two ATP-binding proteins (PotA), two transmembrane proteins (PotB and PotC) and a solute-binding protein (PotD).

Its subcellular location is the cell inner membrane. The catalysed reaction is ATP + H2O + polyamine-[polyamine-binding protein]Side 1 = ADP + phosphate + polyamineSide 2 + [polyamine-binding protein]Side 1.. Part of the ABC transporter complex PotABCD involved in spermidine/putrescine import. Responsible for energy coupling to the transport system. This chain is Spermidine/putrescine import ATP-binding protein PotA, found in Borreliella afzelii (strain PKo) (Borrelia afzelii).